Here is a 188-residue protein sequence, read N- to C-terminus: Methylated-DNA--protein-cysteine methyltransferase (188 aa).

Positions 120, 121, and 134 each coordinate DNA. Residue cysteine 151 is the Nucleophile; methyl group acceptor of the active site. Residue serine 157 participates in DNA binding.

The protein belongs to the MGMT family.

It is found in the nucleus. It catalyses the reaction a 6-O-methyl-2'-deoxyguanosine in DNA + L-cysteinyl-[protein] = S-methyl-L-cysteinyl-[protein] + a 2'-deoxyguanosine in DNA. The enzyme catalyses a 4-O-methyl-thymidine in DNA + L-cysteinyl-[protein] = a thymidine in DNA + S-methyl-L-cysteinyl-[protein]. Its function is as follows. Involved in the cellular defense against the biological effects of O6-methylguanine (O6-MeG) and O4-methylthymine (O4-MeT) in DNA. Repairs the methylated nucleobase in DNA by stoichiometrically transferring the methyl group to a cysteine residue in the enzyme. This is a suicide reaction: the enzyme is irreversibly inactivated. Prefers double-stranded DNA over single-stranded DNA as substrate. The protein is Methylated-DNA--protein-cysteine methyltransferase (MGT1) of Saccharomyces cerevisiae (strain ATCC 204508 / S288c) (Baker's yeast).